We begin with the raw amino-acid sequence, 185 residues long: A-type ATP synthase subunit E (185 aa).

The protein belongs to the V-ATPase E subunit family. In terms of assembly, has multiple subunits with at least A(3), B(3), C, D, E, F, H, I and proteolipid K(x).

Its subcellular location is the cell membrane. Component of the A-type ATP synthase that produces ATP from ADP in the presence of a proton gradient across the membrane. This chain is A-type ATP synthase subunit E, found in Thermoplasma volcanium (strain ATCC 51530 / DSM 4299 / JCM 9571 / NBRC 15438 / GSS1).